The following is an 88-amino-acid chain: Conotoxin VxVIB (88 aa).

An N-terminal signal peptide occupies residues 1 to 22 (MNLACVLIVAVLFLTASQLATA). The propeptide occupies 23-52 (ASYARDKQEYPAVRSSDEMQDSEDLTLTKE). Intrachain disulfides connect Cys53–Cys68, Cys60–Cys72, and Cys67–Cys81.

As to expression, expressed by the venom duct.

It localises to the secreted. In terms of biological role, may act as a neurotoxin, but produces no obvious effect on ionic currents when tested on the mouse dorsal rooted ganglia (DRG). The chain is Conotoxin VxVIB from Conus vexillum (Flag cone).